Consider the following 241-residue polypeptide: ATP synthase subunit a (241 aa).

5 consecutive transmembrane segments (helical) span residues 30 to 50 (GQVF…VVVG), 91 to 111 (FIGT…LIPW), 128 to 148 (INTT…AGLS), 193 to 213 (LVVA…VMFL), and 214 to 234 (GLFT…YYIG).

The protein belongs to the ATPase A chain family. As to quaternary structure, F-type ATPases have 2 components, CF(1) - the catalytic core - and CF(0) - the membrane proton channel. CF(1) has five subunits: alpha(3), beta(3), gamma(1), delta(1), epsilon(1). CF(0) has four main subunits: a, b, b' and c.

The protein localises to the cellular thylakoid membrane. Its function is as follows. Key component of the proton channel; it plays a direct role in the translocation of protons across the membrane. This is ATP synthase subunit a from Prochlorococcus marinus (strain SARG / CCMP1375 / SS120).